The chain runs to 1183 residues: DNA-directed RNA polymerase subunit beta (1183 aa).

The span at 1151–1162 shows a compositional bias: acidic residues; sequence EIEMADVDDEDA. Residues 1151-1183 form a disordered region; that stretch reads EIEMADVDDEDAAERKVDLQQKSAPESQKETTD.

The protein belongs to the RNA polymerase beta chain family. The RNAP catalytic core consists of 2 alpha, 1 beta, 1 beta' and 1 omega subunit. When a sigma factor is associated with the core the holoenzyme is formed, which can initiate transcription.

The enzyme catalyses RNA(n) + a ribonucleoside 5'-triphosphate = RNA(n+1) + diphosphate. DNA-dependent RNA polymerase catalyzes the transcription of DNA into RNA using the four ribonucleoside triphosphates as substrates. In Staphylococcus epidermidis (strain ATCC 12228 / FDA PCI 1200), this protein is DNA-directed RNA polymerase subunit beta.